The chain runs to 383 residues: MPRGFLVKRNKKATPVSYRVRSEEDEQGAFVAQDVPCARRPVSPVQFGNPETVYRAMYSPTRPVSREHERACLERRFNLGSPISAESFPAAPNCSDQAPVDLKIGTSNSNRTGTTVTTKRPASDTERKGKPASKKAKAMRKLQFEDEMTTSPVLGLKIKEGPVEQKPRSQCASGDKPLGEFVCQLCREAYADPFSLAQHKCSRIVRIEYRCPECDKLFSCPANLASHRRWHKPKQSAESNKTPAPEKEETSSDRDTPSPGLSESGSEDGLYDCQHCGKKFKRQAYLKKHVTAHHDAPEKPQSHAPLNLSASECHLCPVCGENFPSRMSQERHIRLQHSAQVYPCKYCPAMFYSSPGLTRHINKCHPSENRQVILLQMPVRPAC.

Residues 1–20 (MPRGFLVKRNKKATPVSYRV) are SNAG domain. Disordered stretches follow at residues 99-141 (PVDL…AMRK) and 229-269 (RWHK…SEDG). Polar residues predominate over residues 105-120 (GTSNSNRTGTTVTTKR). Residues 130 to 140 (KPASKKAKAMR) are compositionally biased toward basic residues. The segment at 209-231 (YRCPECDKLFSCPANLASHRRWH) adopts a C2H2-type 1 zinc-finger fold. Over residues 244-256 (APEKEETSSDRDT) the composition is skewed to basic and acidic residues. The C2H2-type 2; degenerate zinc-finger motif lies at 271 to 295 (YDCQHCGKKFKRQAYLKKHVTAHHD). 2 C2H2-type zinc fingers span residues 314–337 (HLCPVCGENFPSRMSQERHIRLQH) and 342–365 (YPCKYCPAMFYSSPGLTRHINKCH).

This sequence belongs to the INSM1 family.

The protein localises to the nucleus. May act as a transcriptional regulator. May play a role in neurogenesis and neuroendocrine cell differentiation during embryonic development. The polypeptide is Insulinoma-associated protein 1a (insm1a) (Danio rerio (Zebrafish)).